The following is a 515-amino-acid chain: GMP synthase [glutamine-hydrolyzing] (515 aa).

The 193-residue stretch at 6-198 (KVIIIDYGSQ…LFHVAKLKAD (193 aa)) folds into the Glutamine amidotransferase type-1 domain. Residue cysteine 83 is the Nucleophile of the active site. Active-site residues include histidine 172 and glutamate 174. The GMPS ATP-PPase domain maps to 199–390 (WTMSSFVERA…LGLPDFIIWR (192 aa)). 226–232 (SGGIDST) lines the ATP pocket.

Homodimer.

The catalysed reaction is XMP + L-glutamine + ATP + H2O = GMP + L-glutamate + AMP + diphosphate + 2 H(+). The protein operates within purine metabolism; GMP biosynthesis; GMP from XMP (L-Gln route): step 1/1. Functionally, catalyzes the synthesis of GMP from XMP. This chain is GMP synthase [glutamine-hydrolyzing], found in Nitratidesulfovibrio vulgaris (strain DP4) (Desulfovibrio vulgaris).